Here is a 423-residue protein sequence, read N- to C-terminus: Serine--tRNA ligase (423 aa).

Position 230-232 (230-232) interacts with L-serine; sequence TAE. Residue 261 to 263 participates in ATP binding; it reads RAE. Glutamate 284 is an L-serine binding site. 348–351 contributes to the ATP binding site; it reads EISS. Serine 384 provides a ligand contact to L-serine.

This sequence belongs to the class-II aminoacyl-tRNA synthetase family. Type-1 seryl-tRNA synthetase subfamily. In terms of assembly, homodimer. The tRNA molecule binds across the dimer.

Its subcellular location is the cytoplasm. It catalyses the reaction tRNA(Ser) + L-serine + ATP = L-seryl-tRNA(Ser) + AMP + diphosphate + H(+). The catalysed reaction is tRNA(Sec) + L-serine + ATP = L-seryl-tRNA(Sec) + AMP + diphosphate + H(+). It functions in the pathway aminoacyl-tRNA biosynthesis; selenocysteinyl-tRNA(Sec) biosynthesis; L-seryl-tRNA(Sec) from L-serine and tRNA(Sec): step 1/1. Functionally, catalyzes the attachment of serine to tRNA(Ser). Is also able to aminoacylate tRNA(Sec) with serine, to form the misacylated tRNA L-seryl-tRNA(Sec), which will be further converted into selenocysteinyl-tRNA(Sec). This Acetivibrio thermocellus (strain ATCC 27405 / DSM 1237 / JCM 9322 / NBRC 103400 / NCIMB 10682 / NRRL B-4536 / VPI 7372) (Clostridium thermocellum) protein is Serine--tRNA ligase.